The following is a 487-amino-acid chain: Betaine aldehyde dehydrogenase (487 aa).

Ile-27 and Asp-93 together coordinate K(+). Position 149-151 (149-151 (GAW)) interacts with NAD(+). The active-site Charge relay system is the Lys-161. NAD(+) contacts are provided by residues 175 to 178 (KPSE) and 228 to 231 (SVPT). Leu-243 is a binding site for K(+). The active-site Proton acceptor is the Glu-249. Residues Gly-251, Cys-283, and Glu-384 each coordinate NAD(+). The active-site Nucleophile is the Cys-283. Cysteine sulfenic acid (-SOH) is present on Cys-283. Lys-454 and Gly-457 together coordinate K(+). The Charge relay system role is filled by Glu-461.

It belongs to the aldehyde dehydrogenase family. Dimer of dimers. The cofactor is K(+).

It carries out the reaction betaine aldehyde + NAD(+) + H2O = glycine betaine + NADH + 2 H(+). It functions in the pathway amine and polyamine biosynthesis; betaine biosynthesis via choline pathway; betaine from betaine aldehyde: step 1/1. Functionally, involved in the biosynthesis of the osmoprotectant glycine betaine. Catalyzes the irreversible oxidation of betaine aldehyde to the corresponding acid. This chain is Betaine aldehyde dehydrogenase, found in Brucella abortus (strain S19).